The primary structure comprises 52 residues: Large ribosomal subunit protein eL40 (52 aa).

This sequence belongs to the eukaryotic ribosomal protein eL40 family.

The sequence is that of Large ribosomal subunit protein eL40 from Thermococcus onnurineus (strain NA1).